Consider the following 572-residue polypeptide: Zyxin (572 aa).

The residue at position 2 (A2) is an N-acetylalanine. The segment at 23-351 (QKKFGPVVAP…VRSPGAPGPL (329 aa)) is disordered. 2 stretches are compositionally biased toward pro residues: residues 63 to 78 (IPPPPPEDFPLPPPPL) and 93 to 108 (FPPPPPPIEESFPPAP). S116, S142, S143, S169, and S170 each carry phosphoserine. Positions 143-156 (SIDLEIDSLSSLLD) are enriched in low complexity. At T179 the chain carries Phosphothreonine. Residues 202 to 239 (SPSSSQPLPQVPAPAQSQTQFHVQPQPQPKPQVQLHVQ) show a composition bias toward low complexity. The span at 240–252 (SQTQPVSLANTQP) shows a compositional bias: polar residues. R253 is modified (asymmetric dimethylarginine). A compositionally biased stretch (pro residues) spans 253-265 (RGPPASSPAPAPK). S259 carries the post-translational modification Phosphoserine. The residue at position 265 (K265) is an N6-acetyllysine. A Phosphoserine modification is found at S267. T270 is subject to Phosphothreonine. An N6-acetyllysine modification is found at K272. A Phosphothreonine modification is found at T274. N6-acetyllysine is present on K279. S281, S288, and S308 each carry phosphoserine. Over residues 305–318 (GTGSPQPPSFTYAQ) the composition is skewed to polar residues. Over residues 319–330 (QREKPRVQEKQH) the composition is skewed to basic and acidic residues. The residue at position 344 (S344) is a Phosphoserine. 3 consecutive LIM zinc-binding domains span residues 384–443 (CGRC…TLEK), 444–503 (CNTC…YAPR), and 504–570 (CSVC…TARA).

It belongs to the zyxin/ajuba family. Interacts with HPV type 6 protein E6. Does not interact significantly with E6 proteins from HPV types 11, 16, or 18. Interacts, via the Pro-rich regions, with the EVH1 domains of ENAH, EVL and VASP. Interacts with the first LIM domain of TES. Interacts with NEBL (isoform 2). Interacts with SYNPO2. In terms of assembly, (Microbial infection) Interacts with human papillomavirus type 6/HPV6 protein E6. Does not interact significantly with E6 proteins from HPV types 11, 16, or 18.

It is found in the cytoplasm. The protein resides in the cytoskeleton. It localises to the nucleus. The protein localises to the cell junction. Its subcellular location is the focal adhesion. Functionally, adhesion plaque protein. Binds alpha-actinin and the CRP protein. Important for targeting TES and ENA/VASP family members to focal adhesions and for the formation of actin-rich structures. May be a component of a signal transduction pathway that mediates adhesion-stimulated changes in gene expression. The sequence is that of Zyxin (ZYX) from Homo sapiens (Human).